Consider the following 380-residue polypeptide: Queuine tRNA-ribosyltransferase (380 aa).

The Proton acceptor role is filled by Asp-96. Substrate is bound by residues 96–100, Asp-150, Gln-193, and Gly-220; that span reads DSGGF. The segment at 251-257 is RNA binding; that stretch reads GVGAPDS. Asp-270 serves as the catalytic Nucleophile. Positions 275–279 are RNA binding; important for wobble base 34 recognition; sequence TRIAR. 4 residues coordinate Zn(2+): Cys-308, Cys-310, Cys-313, and His-339.

It belongs to the queuine tRNA-ribosyltransferase family. As to quaternary structure, homodimer. Within each dimer, one monomer is responsible for RNA recognition and catalysis, while the other monomer binds to the replacement base PreQ1. It depends on Zn(2+) as a cofactor.

It catalyses the reaction 7-aminomethyl-7-carbaguanine + guanosine(34) in tRNA = 7-aminomethyl-7-carbaguanosine(34) in tRNA + guanine. Its pathway is tRNA modification; tRNA-queuosine biosynthesis. Catalyzes the base-exchange of a guanine (G) residue with the queuine precursor 7-aminomethyl-7-deazaguanine (PreQ1) at position 34 (anticodon wobble position) in tRNAs with GU(N) anticodons (tRNA-Asp, -Asn, -His and -Tyr). Catalysis occurs through a double-displacement mechanism. The nucleophile active site attacks the C1' of nucleotide 34 to detach the guanine base from the RNA, forming a covalent enzyme-RNA intermediate. The proton acceptor active site deprotonates the incoming PreQ1, allowing a nucleophilic attack on the C1' of the ribose to form the product. After dissociation, two additional enzymatic reactions on the tRNA convert PreQ1 to queuine (Q), resulting in the hypermodified nucleoside queuosine (7-(((4,5-cis-dihydroxy-2-cyclopenten-1-yl)amino)methyl)-7-deazaguanosine). The protein is Queuine tRNA-ribosyltransferase of Streptococcus sanguinis (strain SK36).